A 249-amino-acid polypeptide reads, in one-letter code: ATP synthase subunit a (249 aa).

The next 6 membrane-spanning stretches (helical) occupy residues 30–50, 84–104, 114–134, 143–163, 193–213, and 220–240; these read SLYM…GSAG, FFPL…IGVI, LIVT…YGLY, VFVP…IEVI, FVTS…LPLA, and ILEV…TCIY.

Belongs to the ATPase A chain family. As to quaternary structure, F-type ATPases have 2 components, CF(1) - the catalytic core - and CF(0) - the membrane proton channel. CF(1) has five subunits: alpha(3), beta(3), gamma(1), delta(1), epsilon(1). CF(0) has three main subunits: a(1), b(2) and c(9-12). The alpha and beta chains form an alternating ring which encloses part of the gamma chain. CF(1) is attached to CF(0) by a central stalk formed by the gamma and epsilon chains, while a peripheral stalk is formed by the delta and b chains.

Its subcellular location is the cell inner membrane. In terms of biological role, key component of the proton channel; it plays a direct role in the translocation of protons across the membrane. In Afipia carboxidovorans (strain ATCC 49405 / DSM 1227 / KCTC 32145 / OM5) (Oligotropha carboxidovorans), this protein is ATP synthase subunit a.